Reading from the N-terminus, the 184-residue chain is Photosystem I assembly protein Ycf4 (184 aa).

2 helical membrane passes run 22–42 and 57–77; these read FCWA…GISS and IIFF…LFIS.

The protein belongs to the Ycf4 family.

It is found in the plastid. The protein localises to the chloroplast thylakoid membrane. Its function is as follows. Seems to be required for the assembly of the photosystem I complex. The protein is Photosystem I assembly protein Ycf4 of Ipomoea purpurea (Common morning glory).